Consider the following 1158-residue polypeptide: Adipocyte enhancer-binding protein 1 (1158 aa).

Positions 1–25 (MAAVRGAPLLSCLLALLALCPGGRP) are cleaved as a signal peptide. The tract at residues 41 to 387 (FLSELEPEPR…TPTEKVKCPP (347 aa)) is disordered. Acidic residues predominate over residues 45–55 (LEPEPREDDVE). The segment covering 100-110 (DKGPKVPKESL) has biased composition (basic and acidic residues). Residues 116–166 (PPKKGKEKPPKATKKPKEKPPKATKKPKEKPPKATKKPKEKPPKATKKPPS) show a composition bias toward basic residues. Positions 182-192 (PLPPPPSPGPE) are enriched in pro residues. The segment covering 193-202 (ELPQEGGAPL) has biased composition (low complexity). Residues 211–223 (EETHVEAREHQPE) are compositionally biased toward basic and acidic residues. The span at 252–266 (RQKQPRPPPSRRRRP) shows a compositional bias: basic residues. Residues 267–289 (ERVWPEPPEEKAPAPAPEERIEP) are compositionally biased toward basic and acidic residues. A compositionally biased stretch (pro residues) spans 290-300 (PVKPLLPPLPP). Residues 326–371 (PDAERQTDEEKEELKKPKKEDSSPKEETDKWAVEKGKDHKEPRKGE) show a composition bias toward basic and acidic residues. In terms of domain architecture, F5/8 type C spans 383-540 (VKCPPIGMES…LCMRLEVLGC (158 aa)). Residues 390–555 (MESHRIEDNQ…YSYYAQNEVV (166 aa)) form a required for DNA-binding and interaction with NFKBIA region. Positions 421–624 (TGATEDDYYD…EPEFRYTAGI (204 aa)) are interaction with MAPK1 and MAPK3. N-linked (GlcNAc...) asparagine glycosylation is present at N528. The tract at residues 555–985 (VATDDLDFRH…TQCNFILARS (431 aa)) is interaction with PTEN. The Peptidase M14 domain maps to 563–904 (RHHSYKDMRQ…EALLTFMEQV (342 aa)). N922 carries an N-linked (GlcNAc...) asparagine glycan. The segment at 941 to 1158 (DYWRILNPGE…ETYTVNFGDF (218 aa)) is required for transcriptional repression. Positions 1006–1158 (DPSRPMTPQQ…ETYTVNFGDF (153 aa)) are interaction with MAPK1 and MAPK3. The segment covering 1108-1137 (EFETQLEPEFETQLEPEFEEEEEEEKEEEI) has biased composition (acidic residues). The interval 1108–1141 (EFETQLEPEFETQLEPEFEEEEEEEKEEEIATGQ) is disordered.

Belongs to the peptidase M14 family. In terms of assembly, isoform 1: Interacts with different types of collagen, including collagens I, III, and V. Isoform 2: Interacts with GNG5, NFKBIA, MAPK1, MAPK3 and PTEN. Interaction with MAPK1 may stimulate DNA-binding. May interact with calmodulin. Binds to DNA in vitro. In terms of processing, phosphorylated by MAPK1 in vitro. As to expression, expressed in osteoblast and visceral fat.

The protein localises to the secreted. Its subcellular location is the cytoplasm. It is found in the nucleus. In terms of biological role, as a positive regulator of collagen fibrillogenesis, it is probably involved in the organization and remodeling of the extracellular matrix. Functionally, may positively regulate MAP-kinase activity in adipocytes, leading to enhanced adipocyte proliferation and reduced adipocyte differentiation. May also positively regulate NF-kappa-B activity in macrophages by promoting the phosphorylation and subsequent degradation of I-kappa-B-alpha (NFKBIA), leading to enhanced macrophage inflammatory responsiveness. Can act as a transcriptional repressor. This Homo sapiens (Human) protein is Adipocyte enhancer-binding protein 1 (AEBP1).